Consider the following 378-residue polypeptide: Forkhead box protein F1 (378 aa).

The tract at residues 1–45 (MSAPDKQQPPHGGGTGGGGGAGGQAMDPAAAGPTKAKKTNAGVRR) is disordered. Gly residues predominate over residues 11 to 23 (HGGGTGGGGGAGG). A compositionally biased stretch (low complexity) spans 24 to 42 (QAMDPAAAGPTKAKKTNAG). The fork-head DNA-binding region spans 47–138 (EKPPYSYIAL…EFMFEEGSFR (92 aa)).

As to expression, expressed primarily in lung in alveolar type II pneumocyte cells, and to a lesser extent in placenta, stomach, intestine and colon.

Its subcellular location is the nucleus. Its function is as follows. Probable transcription activator for a number of lung-specific genes. The chain is Forkhead box protein F1 (Foxf1) from Mus musculus (Mouse).